Here is a 218-residue protein sequence, read N- to C-terminus: Ribose-5-phosphate isomerase A (218 aa).

Substrate contacts are provided by residues 28–31 (TGST), 81–84 (DGAD), and 94–97 (KGGG). Glu103 acts as the Proton acceptor in catalysis. Lys121 contacts substrate.

The protein belongs to the ribose 5-phosphate isomerase family. Homodimer.

The enzyme catalyses aldehydo-D-ribose 5-phosphate = D-ribulose 5-phosphate. The protein operates within carbohydrate degradation; pentose phosphate pathway; D-ribose 5-phosphate from D-ribulose 5-phosphate (non-oxidative stage): step 1/1. Catalyzes the reversible conversion of ribose-5-phosphate to ribulose 5-phosphate. This is Ribose-5-phosphate isomerase A from Proteus mirabilis (strain HI4320).